A 333-amino-acid polypeptide reads, in one-letter code: Probable 4-hydroxyproline 2-epimerase (333 aa).

The Proton acceptor role is filled by C90. Substrate is bound by residues 91 to 92 (GH), H223, and D249. C253 (proton donor) is an active-site residue. A substrate-binding site is contributed by 254 to 255 (GT).

The protein belongs to the proline racemase family.

The catalysed reaction is trans-4-hydroxy-L-proline = cis-4-hydroxy-D-proline. Likely catalyzes the epimerization of trans-4-hydroxy-L-proline (t4LHyp) to cis-4-hydroxy-D-proline (c4DHyp). May be involved in the degradation pathway that converts t4LHyp to alpha-ketoglutarate, which would allow R.meliloti to grow on t4LHyp as a sole carbon source. In Rhizobium meliloti (strain 1021) (Ensifer meliloti), this protein is Probable 4-hydroxyproline 2-epimerase.